A 1023-amino-acid chain; its full sequence is Sodium/potassium-transporting ATPase subunit alpha-1 (1023 aa).

The propeptide occupies 1-5; it reads MGKGV. Residues 1–11 show a composition bias toward basic and acidic residues; sequence MGKGVGRDKYE. The interval 1 to 38 is disordered; the sequence is MGKGVGRDKYEPAAVSEHGDKKGKKAKKERDMDELKKE. Topologically, residues 6 to 87 are cytoplasmic; that stretch reads GRDKYEPAAV…NALTPPPTTP (82 aa). Lys9 is subject to N6-acetyllysine. At Tyr10 the chain carries Phosphotyrosine. Position 16 is a phosphoserine; by PKC (Ser16). N6-acetyllysine is present on Lys21. Basic and acidic residues predominate over residues 28-38; sequence KERDMDELKKE. Residues Ser40 and Ser47 each carry the phosphoserine modification. The segment at 82–84 is phosphoinositide-3 kinase binding; sequence PPP. The helical transmembrane segment at 88–108 threads the bilayer; sequence EWVKFCRQLFGGFSMLLWIGA. Topologically, residues 109-131 are extracellular; the sequence is ILCFLAYGILAATEEDFDNDNLY. A helical transmembrane segment spans residues 132-152; that stretch reads LGVVLAAVVIITGCFSYYQEA. Over 153–288 the chain is Cytoplasmic; that stretch reads KSSKIMESFK…GGQTPIAAEI (136 aa). The interval 216–235 is disordered; it reads SSLTGESEPQTRSPDFTNEN. Position 228 is a phosphoserine (Ser228). At Tyr260 the chain carries Phosphotyrosine. A helical membrane pass occupies residues 289–308; it reads EHFIHIITGVAVFLGVSFFI. At 309-320 the chain is on the extracellular side; that stretch reads LSLILEYTWLEA. Residues 321 to 338 form a helical membrane-spanning segment; it reads VIFLIGIIVANVPEGLLA. Residues 339 to 772 are Cytoplasmic-facing; that stretch reads TVTVCLTLTA…EEGRLIFDNL (434 aa). The 4-aspartylphosphate intermediate role is filled by Asp376. Phosphoserine occurs at positions 452 and 484. Residue Lys487 participates in ATP binding. Position 542 is a phosphotyrosine (Tyr542). Residues 596 to 717 form a mediates interaction with SCN7A region; that stretch reads RAAVPDAVGK…QGAIVAVTGD (122 aa). Lys661 is modified (N6-succinyllysine). Residues Ser668 and Ser675 each carry the phosphoserine modification. Residues Asp717 and Asp721 each contribute to the Mg(2+) site. Residues 773–792 form a helical membrane-spanning segment; that stretch reads KKSIAYTLTSNIPEITPFLI. Topologically, residues 793–802 are extracellular; sequence FIIANIPLPL. The chain crosses the membrane as a helical span at residues 803-823; that stretch reads GTVTILCIDLGTDMVPAISLA. At 824–843 the chain is on the cytoplasmic side; the sequence is YEQAESDIMKRQPRNPKTDK. A helical transmembrane segment spans residues 844–866; sequence LVNERLISMAYGQIGMIQALGGF. The Extracellular portion of the chain corresponds to 867 to 918; that stretch reads FTYFVILAENGFLPFHLLGIRVDWDDRWINDVEDSYGQQWTYEQRKIVEFTC. Residues 919-938 form a helical membrane-spanning segment; it reads HTAFFVSIVVVQWADLVICK. The Cytoplasmic portion of the chain corresponds to 939 to 951; sequence TRRNSVFQQGMKN. Ser943 is modified (phosphoserine; by PKA). Residues 952-970 traverse the membrane as a helical segment; it reads KILIFGLFEETALAAFLSY. Over 971 to 985 the chain is Extracellular; that stretch reads CPGMGVALRMYPLKP. A helical transmembrane segment spans residues 986-1006; that stretch reads TWWFCAFPYSLLIFVYDEIRK. At 1007-1023 the chain is on the cytoplasmic side; sequence LIIRRRPGGWVEKETYY.

The protein belongs to the cation transport ATPase (P-type) (TC 3.A.3) family. Type IIC subfamily. The sodium/potassium-transporting ATPase is composed of a catalytic alpha subunit, an auxiliary non-catalytic beta subunit and an additional regulatory subunit. Interacts with regulatory subunit FXYD1. Interacts with regulatory subunit FXYD3. Interacts with SIK1. Interacts with SLC35G1 and STIM1. Interacts with CLN3; this interaction regulates the sodium/potassium-transporting ATPase complex localization at the plasma membrane. Interacts with SCN7A; activates ATP1A1 P-type sodium:potassium-exchanging transporter activity which indirectly signals to nearby neurons to regulate sodium homeostasis. In terms of processing, phosphorylation on Tyr-10 modulates pumping activity. Phosphorylation of Ser-943 by PKA modulates the response of ATP1A1 to PKC. Dephosphorylation by protein phosphatase 2A (PP2A) following increases in intracellular sodium, leading to increase catalytic activity. As to expression, expressed in endocardial endothelial cells.

It localises to the cell membrane. The protein localises to the basolateral cell membrane. The protein resides in the sarcolemma. It is found in the cell projection. Its subcellular location is the axon. It localises to the melanosome. The enzyme catalyses K(+)(out) + Na(+)(in) + ATP + H2O = K(+)(in) + Na(+)(out) + ADP + phosphate + H(+). This is the catalytic component of the active enzyme, which catalyzes the hydrolysis of ATP coupled with the exchange of sodium and potassium ions across the plasma membrane. This action creates the electrochemical gradient of sodium and potassium ions, providing the energy for active transport of various nutrients. Could also be part of an osmosensory signaling pathway that senses body-fluid sodium levels and controls salt intake behavior as well as voluntary water intake to regulate sodium homeostasis. The chain is Sodium/potassium-transporting ATPase subunit alpha-1 (ATP1A1) from Oryctolagus cuniculus (Rabbit).